Consider the following 310-residue polypeptide: Prostate androgen-regulated mucin-like protein 1 homolog (310 aa).

A signal peptide spans 1–20; sequence MVYKTLFALCILTAGWRVQS. Residues 21-258 are Extracellular-facing; that stretch reads LPTSAPLSVS…EVEHALSSGS (238 aa). The span at 40 to 74 shows a compositional bias: polar residues; the sequence is TIWTSSPQNTDADTASPSNGTHNNSVLPVTASAPT. The segment at 40 to 224 is disordered; sequence TIWTSSPQNT…VPQEKTPPTT (185 aa). Residues N58, N62, and N80 are each glycosylated (N-linked (GlcNAc...) asparagine). Positions 92 to 103 are enriched in polar residues; sequence SPGSNWEGTNTD. Low complexity predominate over residues 150-209; the sequence is SPQAPASSPSSLSTSPPEVFSVSVTTNHSSTVTSTQPTGAPTAPESPTEESSSDHTPTSH. The N-linked (GlcNAc...) asparagine glycan is linked to N176. A helical membrane pass occupies residues 259-279; it reads IAAITVTVIAVVLLVFGVAAY. The Cytoplasmic portion of the chain corresponds to 280-310; the sequence is LKIRHSSYGRLLDDHDYGSWGNYNNPLYDDS. A Phosphoserine modification is found at S298.

This sequence belongs to the PARM family. Highly N-glycosylated and O-glycosylated.

The protein localises to the cell membrane. The protein resides in the golgi apparatus membrane. Its subcellular location is the endosome membrane. May regulate TLP1 expression and telomerase activity, thus enabling certain prostatic cells to resist apoptosis. The chain is Prostate androgen-regulated mucin-like protein 1 homolog (PARM1) from Pongo abelii (Sumatran orangutan).